The sequence spans 288 residues: Anthranilate synthase beta subunit 1, chloroplastic (288 aa).

Residues 1–58 (MACSHLAAAAAAASPAAARSPAASSAATASAFARLSATPRVASGGLAVRGQRGVAAVV) constitute a chloroplast transit peptide. The Glutamine amidotransferase type-1 domain occupies 83 to 282 (PIIVIDNYDS…VRFIEELEKQ (200 aa)). 134-136 (GPG) is a binding site for L-glutamine. Cysteine 161 serves as the catalytic Nucleophile. L-glutamine-binding positions include glutamine 165 and 215-216 (SL). Catalysis depends on residues histidine 256 and glutamate 258.

Heterotetramer consisting of two non-identical subunits: a beta subunit and a large alpha subunit. In terms of tissue distribution, expressed in roots and leaves.

Its subcellular location is the plastid. The protein localises to the chloroplast. It carries out the reaction chorismate + L-glutamine = anthranilate + pyruvate + L-glutamate + H(+). It functions in the pathway amino-acid biosynthesis; L-tryptophan biosynthesis; L-tryptophan from chorismate: step 1/5. Functionally, part of a heterotetrameric complex that catalyzes the two-step biosynthesis of anthranilate, an intermediate in the biosynthesis of L-tryptophan. In the first step, the glutamine-binding beta subunit of anthranilate synthase (AS) provides the glutamine amidotransferase activity which generates ammonia as a substrate that, along with chorismate, is used in the second step, catalyzed by the large alpha subunit of AS to produce anthranilate. The sequence is that of Anthranilate synthase beta subunit 1, chloroplastic from Oryza sativa subsp. japonica (Rice).